The sequence spans 948 residues: Phosphatidylinositol-glycan-specific phospholipase D (948 aa).

An N-terminal signal peptide occupies residues methionine 1 to glycine 24. 8 N-linked (GlcNAc...) asparagine glycosylation sites follow: asparagine 39, asparagine 78, asparagine 148, asparagine 300, asparagine 433, asparagine 452, asparagine 506, and asparagine 535. FG-GAP repeat units follow at residues threonine 451–isoleucine 512, glutamine 526–glycine 588, leucine 596–glycine 656, and aspartate 663–phenylalanine 724. 2 N-linked (GlcNAc...) asparagine glycosylation sites follow: asparagine 749 and asparagine 788. FG-GAP repeat units follow at residues asparagine 799–aspartate 861 and serine 895–glutamine 948.

Belongs to the GPLD1 family. Requires Ca(2+) as cofactor.

The protein localises to the secreted. The catalysed reaction is a 6-(alpha-D-glucosaminyl)-1-(1,2-diacyl-sn-glycero-3-phospho)-1D-myo-inositol + H2O = 6-(alpha-D-glucosaminyl)-1D-myo-inositol + a 1,2-diacyl-sn-glycero-3-phosphate + H(+). Functionally, hydrolyzes the inositol phosphate linkage in proteins anchored by phosphatidylinositol glycans (GPI-anchor) thus releasing these proteins from the membrane. May also cleave GPI anchor intermediates intracellularly. This chain is Phosphatidylinositol-glycan-specific phospholipase D (pldG), found in Dictyostelium discoideum (Social amoeba).